Consider the following 185-residue polypeptide: Ribosome-recycling factor (185 aa).

The tract at residues 137 to 158 (NQVKKLEKDKEISEDESKKAQE) is disordered. A compositionally biased stretch (basic and acidic residues) spans 140–158 (KKLEKDKEISEDESKKAQE).

Belongs to the RRF family.

It localises to the cytoplasm. In terms of biological role, responsible for the release of ribosomes from messenger RNA at the termination of protein biosynthesis. May increase the efficiency of translation by recycling ribosomes from one round of translation to another. This chain is Ribosome-recycling factor, found in Helicobacter pylori (strain P12).